Reading from the N-terminus, the 518-residue chain is Glutamate--cysteine ligase (518 aa).

The protein belongs to the glutamate--cysteine ligase type 1 family. Type 1 subfamily.

The catalysed reaction is L-cysteine + L-glutamate + ATP = gamma-L-glutamyl-L-cysteine + ADP + phosphate + H(+). It participates in sulfur metabolism; glutathione biosynthesis; glutathione from L-cysteine and L-glutamate: step 1/2. The sequence is that of Glutamate--cysteine ligase from Buchnera aphidicola subsp. Acyrthosiphon pisum (strain 5A).